A 269-amino-acid polypeptide reads, in one-letter code: NAD kinase (269 aa).

The active-site Proton acceptor is the Asp-45. NAD(+) contacts are provided by residues Asp-45 to Gly-46, Asn-122 to Glu-123, Arg-149, Asp-151, and Ala-186.

Belongs to the NAD kinase family. A divalent metal cation is required as a cofactor.

The protein localises to the cytoplasm. The enzyme catalyses NAD(+) + ATP = ADP + NADP(+) + H(+). Involved in the regulation of the intracellular balance of NAD and NADP, and is a key enzyme in the biosynthesis of NADP. Catalyzes specifically the phosphorylation on 2'-hydroxyl of the adenosine moiety of NAD to yield NADP. In Staphylococcus aureus (strain Mu3 / ATCC 700698), this protein is NAD kinase.